The following is a 316-amino-acid chain: Protease HtpX homolog (316 aa).

Residues 16 to 36 (LFMALGFTIGGTGGAMIALVV) traverse the membrane as a helical segment. H130 contacts Zn(2+). E131 is an active-site residue. Zn(2+) is bound at residue H134. Helical transmembrane passes span 145-165 (MTATIAGAISMLANFGMFFGA) and 174-194 (LATILAVFVAPFAAMIVQMAI). E199 serves as a coordination point for Zn(2+). The disordered stretch occupies residues 285-316 (PNFAALSERRGSVSSVPRTRRRSSALDPNGRG).

It belongs to the peptidase M48B family. Zn(2+) serves as cofactor.

It localises to the cell inner membrane. This chain is Protease HtpX homolog, found in Rhizorhabdus wittichii (strain DSM 6014 / CCUG 31198 / JCM 15750 / NBRC 105917 / EY 4224 / RW1) (Sphingomonas wittichii).